The following is a 404-amino-acid chain: Cysteine desulfurase IscS (404 aa).

Pyridoxal 5'-phosphate contacts are provided by residues 75–76 (AT), Asn155, Gln183, and 203–205 (SAH). Lys206 carries the post-translational modification N6-(pyridoxal phosphate)lysine. Thr243 lines the pyridoxal 5'-phosphate pocket. Catalysis depends on Cys328, which acts as the Cysteine persulfide intermediate. Cys328 provides a ligand contact to [2Fe-2S] cluster.

The protein belongs to the class-V pyridoxal-phosphate-dependent aminotransferase family. NifS/IscS subfamily. As to quaternary structure, homodimer. Forms a heterotetramer with IscU, interacts with other sulfur acceptors. It depends on pyridoxal 5'-phosphate as a cofactor.

The protein resides in the cytoplasm. The enzyme catalyses (sulfur carrier)-H + L-cysteine = (sulfur carrier)-SH + L-alanine. Its pathway is cofactor biosynthesis; iron-sulfur cluster biosynthesis. Master enzyme that delivers sulfur to a number of partners involved in Fe-S cluster assembly, tRNA modification or cofactor biosynthesis. Catalyzes the removal of elemental sulfur atoms from cysteine to produce alanine. Functions as a sulfur delivery protein for Fe-S cluster synthesis onto IscU, an Fe-S scaffold assembly protein, as well as other S acceptor proteins. The chain is Cysteine desulfurase IscS from Vesicomyosocius okutanii subsp. Calyptogena okutanii (strain HA).